Reading from the N-terminus, the 428-residue chain is Histidine--tRNA ligase (428 aa).

The protein belongs to the class-II aminoacyl-tRNA synthetase family. As to quaternary structure, homodimer.

It localises to the cytoplasm. It catalyses the reaction tRNA(His) + L-histidine + ATP = L-histidyl-tRNA(His) + AMP + diphosphate + H(+). The chain is Histidine--tRNA ligase (hisS) from Chlamydia muridarum (strain MoPn / Nigg).